An 886-amino-acid chain; its full sequence is Peptidyl-lysine N-acetyltransferase Pat (886 aa).

One can recognise an ATP-grasp domain in the interval 487–523; that stretch reads QPILHAYGLHTLPTWIASDSAEAVHIAEQIGYPVALK. Residue 513–524 coordinates ATP; it reads AEQIGYPVALKL. The region spanning 726–881 is the N-acetyltransferase domain; sequence CLFRPILPED…GIVGLTLNLA (156 aa).

It in the N-terminal section; belongs to the acetate CoA ligase alpha subunit family. The protein in the central section; belongs to the acetate CoA ligase beta subunit family. Monomer in the absence of acetyl-CoA. Oligomerizes to a tetrameric form in the presence of acetyl-CoA.

The catalysed reaction is L-lysyl-[protein] + acetyl-CoA = N(6)-acetyl-L-lysyl-[protein] + CoA + H(+). With respect to regulation, exhibits positive cooperativity. It may be the result of acetyl-CoA binding to two distinct sites, or the result of subunit interactions. In terms of biological role, acetylates and inactivates the acetyl-CoA synthase (Acs). Can also acetylate other central metabolic enzymes in response to environmental changes. The sequence is that of Peptidyl-lysine N-acetyltransferase Pat (pat) from Salmonella typhimurium (strain LT2 / SGSC1412 / ATCC 700720).